Here is a 913-residue protein sequence, read N- to C-terminus: E3 ubiquitin-protein ligase ZNRF3 (913 aa).

The interval 1–32 (MRPRSGGRPGAPGRRRRRLRRGPRGRRLPPPP) is disordered. Residues 1–52 (MRPRSGGRPGAPGRRRRRLRRGPRGRRLPPPPPLPLLLGLLLAAAGPGAARA) form the signal peptide. Residues 13–27 (GRRRRRLRRGPRGRR) are compositionally biased toward basic residues. The Extracellular segment spans residues 53–216 (KETAFVEVVL…PRQPTEYFDM (164 aa)). Residues 217-237 (GIFLAFFVVVSLVCLILLVKI) traverse the membrane as a helical segment. Topologically, residues 238–913 (KLKQRRSQNS…GSGPGIGTGA (676 aa)) are cytoplasmic. The RING-type; atypical zinc finger occupies 290–331 (CAICLEKYIDGEELRVIPCTHRFHRKCVDPWLLQHHTCPHCR). 2 disordered regions span residues 601 to 669 (AVHL…GLEV) and 855 to 913 (REEE…GTGA). Polar residues-rich tracts occupy residues 634–664 (SGDQ…STSE) and 881–890 (ASLSSAPQDT). Over residues 903–913 (PGSGPGIGTGA) the composition is skewed to gly residues.

Belongs to the ZNRF3 family. As to quaternary structure, interacts with LRP6, FZD4, FZD5, FZD6 and FZD8. Interacts with RSPO1; interaction promotes indirect interaction with LGR4 and membrane clearance of ZNRF3. Interacts with LMBR1L.

The protein resides in the cell membrane. It carries out the reaction S-ubiquitinyl-[E2 ubiquitin-conjugating enzyme]-L-cysteine + [acceptor protein]-L-lysine = [E2 ubiquitin-conjugating enzyme]-L-cysteine + N(6)-ubiquitinyl-[acceptor protein]-L-lysine.. Its pathway is protein modification; protein ubiquitination. Its activity is regulated as follows. Negatively regulated by R-spondin proteins such as RSPO1: interaction with RSPO1 induces the indirect association between ZNRF3 and LGR4, promoting membrane clearance of ZNRF3. Its function is as follows. E3 ubiquitin-protein ligase that acts as a negative regulator of the Wnt signaling pathway by mediating the ubiquitination and subsequent degradation of Wnt receptor complex components Frizzled and LRP6. Acts on both canonical and non-canonical Wnt signaling pathway. Acts as a tumor suppressor in the intestinal stem cell zone by inhibiting the Wnt signaling pathway, thereby restricting the size of the intestinal stem cell zone. Along with RSPO2 and RNF43, constitutes a master switch that governs limb specification. In Mus musculus (Mouse), this protein is E3 ubiquitin-protein ligase ZNRF3 (Znrf3).